We begin with the raw amino-acid sequence, 89 residues long: Small ribosomal subunit protein uS14 (89 aa).

Belongs to the universal ribosomal protein uS14 family. As to quaternary structure, part of the 30S ribosomal subunit. Contacts proteins S3 and S10.

Functionally, binds 16S rRNA, required for the assembly of 30S particles and may also be responsible for determining the conformation of the 16S rRNA at the A site. The protein is Small ribosomal subunit protein uS14 of Leuconostoc citreum (strain KM20).